Reading from the N-terminus, the 150-residue chain is L-alanine exporter AlaE (150 aa).

4 consecutive transmembrane segments (helical) span residues 17–37, 48–68, 86–106, and 111–131; these read FAMV…ISGM, LSIP…DFML, LVAY…VVGA, and IITA…FYGY.

Belongs to the AlaE exporter family.

The protein localises to the cell inner membrane. In terms of biological role, exports L-alanine. The polypeptide is L-alanine exporter AlaE (Aliivibrio fischeri (strain ATCC 700601 / ES114) (Vibrio fischeri)).